We begin with the raw amino-acid sequence, 215 residues long: 16S rRNA (adenine(1408)-N(1))-methyltransferase (215 aa).

S-adenosyl-L-methionine-binding positions include Gly-32, Asp-55, 87-88 (AE), 102-107 (LMPWGS), and 191-193 (TSW).

Belongs to the methyltransferase superfamily. Kanamycin-apramycin resistance family.

It carries out the reaction adenosine(1408) in 16S rRNA + S-adenosyl-L-methionine = N(1)-methyladenosine(1408) in 16S rRNA + S-adenosyl-L-homocysteine + H(+). In terms of biological role, specifically methylates the N(1) position of adenine 1408 in 16S rRNA. Confers resistance to various aminoglycosides. The chain is 16S rRNA (adenine(1408)-N(1))-methyltransferase (kamB) from Streptoalloteichus hindustanus.